The sequence spans 539 residues: Chaperone Ric-8A (539 aa).

Residues 507–539 (MGITPSGNLAPMENAIRDMADERSSSDSDLGLD) are disordered. A compositionally biased stretch (basic and acidic residues) spans 521–532 (AIRDMADERSSS).

This sequence belongs to the synembryn family.

Its subcellular location is the cytoplasm. It localises to the cell cortex. Chaperone that specifically binds and folds nascent G alpha proteins prior to G protein heterotrimer formation, promoting their stability and activity: folds GNAI1, GNAO1, GNA13 and GNAQ. Does not fold G(s) G-alpha proteins GNAS nor GNAL. Also acts as a guanine nucleotide exchange factor (GEF) for G alpha proteins by stimulating exchange of bound GDP for free GTP. The polypeptide is Chaperone Ric-8A (RIC8A) (Gallus gallus (Chicken)).